Here is a 24-residue protein sequence, read N- to C-terminus: Lectin (24 aa).

Residues 1 to 18 are compositionally biased toward polar residues; it reads AEEQSFSSTKFSTDQPNL. The segment at 1-24 is disordered; it reads AEEQSFSSTKFSTDQPNLILQGDA.

The protein belongs to the leguminous lectin family. As to quaternary structure, homotetramer.

The polypeptide is Lectin (Crotalaria juncea (Sunn hemp)).